Reading from the N-terminus, the 216-residue chain is GTP cyclohydrolase-2 (216 aa).

51–55 (RIHSE) provides a ligand contact to GTP. Residues cysteine 56, cysteine 67, and cysteine 69 each contribute to the Zn(2+) site. GTP contacts are provided by residues glutamine 72, 94-96 (EGR), and threonine 116. Aspartate 128 (proton acceptor) is an active-site residue. The active-site Nucleophile is the arginine 130. GTP is bound by residues threonine 151 and lysine 156.

This sequence belongs to the GTP cyclohydrolase II family. It depends on Zn(2+) as a cofactor.

It carries out the reaction GTP + 4 H2O = 2,5-diamino-6-hydroxy-4-(5-phosphoribosylamino)-pyrimidine + formate + 2 phosphate + 3 H(+). It functions in the pathway cofactor biosynthesis; riboflavin biosynthesis; 5-amino-6-(D-ribitylamino)uracil from GTP: step 1/4. Catalyzes the conversion of GTP to 2,5-diamino-6-ribosylamino-4(3H)-pyrimidinone 5'-phosphate (DARP), formate and pyrophosphate. The polypeptide is GTP cyclohydrolase-2 (Haemophilus influenzae (strain PittEE)).